The primary structure comprises 179 residues: MASHIGKLPVTIPAGVEVKIDGQSFTAKGAKGTDSYEIPEGITAVVEGNEVVLTPADDLRPTRAKHGLARSIVAGMVKGVHEGYAKTLEIVGTGYRAQMKGKGIEFSLGYSHTITVEPPAGIEFELPNPNQVIVKGIDKQAVGQCAANIRKLRAPEPYKGKGIKYADEHILRKAGKAGK.

Belongs to the universal ribosomal protein uL6 family. In terms of assembly, part of the 50S ribosomal subunit.

In terms of biological role, this protein binds to the 23S rRNA, and is important in its secondary structure. It is located near the subunit interface in the base of the L7/L12 stalk, and near the tRNA binding site of the peptidyltransferase center. The sequence is that of Large ribosomal subunit protein uL6 from Bifidobacterium adolescentis (strain ATCC 15703 / DSM 20083 / NCTC 11814 / E194a).